A 156-amino-acid chain; its full sequence is Nucleosome assembly protein 1-like 5 (156 aa).

A compositionally biased stretch (basic and acidic residues) spans 1-16; it reads MADPEKQGPAESRAED. A disordered region spans residues 1 to 58; it reads MADPEKQGPAESRAEDEVMEGAQGGEDAATGDSAAAPAAEEPQAPAENAPKPKKDFME. Residues 34-49 show a composition bias toward low complexity; it reads AAAPAAEEPQAPAENA. Residues 68-94 are a coiled coil; it reads VLALKKLQKRCDKIEAKFDKEFQALEK. The segment at 120-156 is disordered; sequence TLEGEDDEDDEEEDDEEEEEEEEAAAGATGGPNFAKK. The span at 122 to 143 shows a compositional bias: acidic residues; the sequence is EGEDDEDDEEEDDEEEEEEEEA.

This sequence belongs to the nucleosome assembly protein (NAP) family.

It is found in the nucleus. This is Nucleosome assembly protein 1-like 5 (Nap1l5) from Mus musculus (Mouse).